The sequence spans 146 residues: Ribonuclease H (146 aa).

Positions 1-141 constitute an RNase H type-1 domain; sequence MKHVDIFTDG…ADELARKGME (141 aa). Aspartate 9, glutamate 47, aspartate 69, and aspartate 133 together coordinate Mg(2+). Residues 123 to 146 are disordered; sequence HAGHPENERADELARKGMEPFKRR. Residues 125–146 show a composition bias toward basic and acidic residues; that stretch reads GHPENERADELARKGMEPFKRR.

Belongs to the RNase H family. As to quaternary structure, monomer. Mg(2+) is required as a cofactor.

It is found in the cytoplasm. The enzyme catalyses Endonucleolytic cleavage to 5'-phosphomonoester.. Functionally, endonuclease that specifically degrades the RNA of RNA-DNA hybrids. The sequence is that of Ribonuclease H from Agrobacterium fabrum (strain C58 / ATCC 33970) (Agrobacterium tumefaciens (strain C58)).